Reading from the N-terminus, the 321-residue chain is CRISPR system ring nuclease SSO1393 (321 aa).

Belongs to the cOA ring nuclease family. In terms of assembly, homodimer. Does not require a metal cofactor. is required as a cofactor.

Its subcellular location is the cytoplasm. The enzyme catalyses cyclic tetraadenylate = 2 5'-hydroxy-diadenylate 2',3'-cylic phosphate. In terms of biological role, CRISPR (clustered regularly interspaced short palindromic repeat) is an adaptive immune system that provides protection against mobile genetic elements (viruses, transposable elements and conjugative plasmids). CRISPR clusters contain spacers, sequences complementary to antecedent mobile elements, and target invading nucleic acids. CRISPR clusters are transcribed and processed into CRISPR RNA (crRNA). A nuclease that degrades cyclic oligoadenylates (cOA), second messengers that induce an antiviral state important for defense against invading nucleic acids. Destruction of cOA deactivates the Csx1 ribonuclease, preventing uncontrolled degradation of cellular RNA. Slowly degrades cA4 (a tetraadenylate ring) into first a linear tetraadenylate product and secondly into a linear diadenylate product with 5'-OH and 2',3'-cyclic phosphate termini. Is 10-fold less active than SSO2081, suggesting it plays a minor role in cA4 degradation. There may be 2 active sites per homodimer. In Saccharolobus solfataricus (strain ATCC 35092 / DSM 1617 / JCM 11322 / P2) (Sulfolobus solfataricus), this protein is CRISPR system ring nuclease SSO1393.